A 394-amino-acid polypeptide reads, in one-letter code: MILQAGTPETSLLRVLFLGLSTLAAFSRAQMELHVPPGLNKLEAVEGEEVVLPAWYTMAREESWSHPREVPILIWFLEQEGKEPNQVLSYINGVMTNKPGTALVHSISSRNVSLRLGALQEGDSGTYRCSVNVQNDEGKSIGHSIKSIELKVLVPPAPPSCSLQGVPYVGTNVTLNCKSPRSKPTAQYQWERLAPSSQVFFGPALDAVRGSLKLTNLSIAMSGVYVCKAQNRVGFAKCNVTLDVMTGSKAAVVAGAVVGTFVGLVLIAGLVLLYQRRSKTLEELANDIKEDAIAPRTLPWTKGSDTISKNGTLSSVTSARALRPPKAAPPRPGTFTPTPSVSSQALSSPRLPRVDEPPPQAVSLTPGGVSSSALSRMGAVPVMVPAQSQAGSLV.

The first 29 residues, Met1 to Ala29, serve as a signal peptide directing secretion. Residues Gln30 to Ala251 are Extracellular-facing. The Ig-like V-type domain maps to Pro37 to Lys146. N-linked (GlcNAc...) asparagine glycosylation is found at Asn111, Asn172, Asn216, and Asn239. The Ig-like C2-type domain occupies Pro159–Asp243. Residues Cys177 and Cys227 are joined by a disulfide bond. Residues Val252 to Leu272 form a helical membrane-spanning segment. Topologically, residues Leu273 to Val394 are cytoplasmic. Ser304 is subject to Phosphoserine. Composition is skewed to polar residues over residues Ser304–Ser318 and Phe335–Ser347. Residues Ser304 to Ser372 form a disordered region. Phosphothreonine occurs at positions 336 and 338. Phosphoserine occurs at positions 340, 343, 348, and 375.

Interacts with MAGI1. As to expression, highly expressed in the heart and lung. Weakly expressed in the kidney and skin. Expression is restricted to the vascular endothelial cells. Expressed in the kidney, heart and tongue (at protein level). Also expressed on megakaryocytes and activated platelets.

It is found in the cell junction. The protein resides in the adherens junction. Its subcellular location is the tight junction. It localises to the cell membrane. Can mediate aggregation most likely through a homophilic molecular interaction. The sequence is that of Endothelial cell-selective adhesion molecule (Esam) from Mus musculus (Mouse).